Reading from the N-terminus, the 721-residue chain is Exo beta-1,2-glucooligosaccharide sophorohydrolase (non-reducing end) (721 aa).

A signal peptide spans 1-18 (MKHIALLTTLLLSASLQA). Residues 474–708 (NHKLIGWNET…LLWNLFMSHP (235 aa)) enclose the Glycoamylase-like domain.

Monomer.

Its subcellular location is the periplasm. The enzyme catalyses [(1-&gt;2)-beta-D-glucosyl](n) + H2O = [(1-&gt;2)-beta-D-glucosyl](n-2) + sophorose. Its function is as follows. Catalyzes the hydrolysis of linear beta-1,2-glucan and beta-1,2-glucooligosaccharides with degrees of polymerization (DPs) greater than or equal to 4, to produce sophorose. The best substrates are tetra- and pentasaccharides. Acts as an exo-type enzyme that releases sophorose from the non-reducing end of the substrate. It cannot hydrolyze cyclic beta-1,2-glucans. The protein is Exo beta-1,2-glucooligosaccharide sophorohydrolase (non-reducing end) of Parabacteroides distasonis (strain ATCC 8503 / DSM 20701 / CIP 104284 / JCM 5825 / NCTC 11152).